Here is a 136-residue protein sequence, read N- to C-terminus: ATP synthase epsilon chain, chloroplastic (136 aa).

Belongs to the ATPase epsilon chain family. In terms of assembly, F-type ATPases have 2 components, CF(1) - the catalytic core - and CF(0) - the membrane proton channel. CF(1) has five subunits: alpha(3), beta(3), gamma(1), delta(1), epsilon(1). CF(0) has three main subunits: a, b and c.

Its subcellular location is the plastid. It is found in the chloroplast thylakoid membrane. Its function is as follows. Produces ATP from ADP in the presence of a proton gradient across the membrane. The sequence is that of ATP synthase epsilon chain, chloroplastic from Chaetosphaeridium globosum (Charophycean green alga).